An 85-amino-acid chain; its full sequence is Small ribosomal subunit protein bS20 (85 aa).

This sequence belongs to the bacterial ribosomal protein bS20 family.

In terms of biological role, binds directly to 16S ribosomal RNA. The protein is Small ribosomal subunit protein bS20 of Cytophaga hutchinsonii (strain ATCC 33406 / DSM 1761 / CIP 103989 / NBRC 15051 / NCIMB 9469 / D465).